Reading from the N-terminus, the 355-residue chain is UDP-N-acetylglucosamine--N-acetylmuramyl-(pentapeptide) pyrophosphoryl-undecaprenol N-acetylglucosamine transferase (355 aa).

Residues 15-17, Asn127, Arg163, Ser191, Ile244, 263-268, and Gln288 each bind UDP-N-acetyl-alpha-D-glucosamine; these read TGG and ALTVSE.

It belongs to the glycosyltransferase 28 family. MurG subfamily.

Its subcellular location is the cell inner membrane. It catalyses the reaction di-trans,octa-cis-undecaprenyl diphospho-N-acetyl-alpha-D-muramoyl-L-alanyl-D-glutamyl-meso-2,6-diaminopimeloyl-D-alanyl-D-alanine + UDP-N-acetyl-alpha-D-glucosamine = di-trans,octa-cis-undecaprenyl diphospho-[N-acetyl-alpha-D-glucosaminyl-(1-&gt;4)]-N-acetyl-alpha-D-muramoyl-L-alanyl-D-glutamyl-meso-2,6-diaminopimeloyl-D-alanyl-D-alanine + UDP + H(+). The protein operates within cell wall biogenesis; peptidoglycan biosynthesis. Cell wall formation. Catalyzes the transfer of a GlcNAc subunit on undecaprenyl-pyrophosphoryl-MurNAc-pentapeptide (lipid intermediate I) to form undecaprenyl-pyrophosphoryl-MurNAc-(pentapeptide)GlcNAc (lipid intermediate II). In Salmonella choleraesuis (strain SC-B67), this protein is UDP-N-acetylglucosamine--N-acetylmuramyl-(pentapeptide) pyrophosphoryl-undecaprenol N-acetylglucosamine transferase.